The primary structure comprises 93 residues: Progonadoliberin-2 (93 aa).

The signal sequence occupies residues M1–G24. The residue at position 25 (Q25) is a Pyrrolidone carboxylic acid. G34 carries the glycine amide modification.

This sequence belongs to the GnRH family. Midbrain and hindbrain.

The protein resides in the secreted. In terms of biological role, stimulates the secretion of gonadotropins. The chain is Progonadoliberin-2 (gnrh2) from Aquarana catesbeiana (American bullfrog).